A 444-amino-acid polypeptide reads, in one-letter code: Vacuolar protein sorting-associated protein 4B (444 aa).

One can recognise an MIT domain in the interval 4–82 (TSPNLQKAID…KEYLKNKEKK (79 aa)). A coiled-coil region spans residues 19–82 (AQEDKAGNYE…KEYLKNKEKK (64 aa)). The span at 78 to 88 (NKEKKAQKPVK) shows a compositional bias: basic and acidic residues. The interval 78 to 117 (NKEKKAQKPVKEGQPSPADEKGNDSDGEGESDDPEKKKLQ) is disordered. Residues Ser-93, Ser-102, and Ser-108 each carry the phosphoserine modification. 174 to 181 (GPPGTGKS) lines the ATP pocket. Position 410 is a phosphoserine (Ser-410).

It belongs to the AAA ATPase family. In terms of assembly, proposed to be monomeric or homodimeric in nucleotide-free form and to oligomerize upon binding to ATP to form two stacked hexameric or heptameric rings with a central pore through which ESCRT-III substrates are translocated in an ATP-dependent manner. In vitro, associates on the inside of a helical tubular structure formed by a CHMP2A-CHMP3 polymer. Interacts with CHMP1A, CHMP1B, CHMP2A, CHMP4B and CHMP6. Interacts with VPS4A; the interaction suggests a heteromeric assembly with VPS4A. Interacts with VTA1.

Its subcellular location is the late endosome membrane. The enzyme catalyses ATP + H2O = ADP + phosphate + H(+). Involved in late steps of the endosomal multivesicular bodies (MVB) pathway. Recognizes membrane-associated ESCRT-III assemblies and catalyzes their disassembly, possibly in combination with membrane fission. Redistributes the ESCRT-III components to the cytoplasm for further rounds of MVB sorting. MVBs contain intraluminal vesicles (ILVs) that are generated by invagination and scission from the limiting membrane of the endosome and mostly are delivered to lysosomes enabling degradation of membrane proteins, such as stimulated growth factor receptors, lysosomal enzymes and lipids. VPS4A/B are required for the exosomal release of SDCBP, CD63 and syndecan. Its function is as follows. (Microbial infection) In conjunction with the ESCRT machinery also appears to function in topologically equivalent membrane fission events, such as the terminal stages of cytokinesis and enveloped virus budding (lentiviruses). The polypeptide is Vacuolar protein sorting-associated protein 4B (VPS4B) (Pongo abelii (Sumatran orangutan)).